A 280-amino-acid chain; its full sequence is Undecaprenyl-diphosphatase (280 aa).

A run of 8 helical transmembrane segments spans residues 3–23, 45–65, 88–108, 115–135, 150–170, 191–211, 225–245, and 255–275; these read IILLIQAVIMGIVEGITEFLP, VDLFVVVVQFGAILAVIYDYW, QLGLSLIVATIPVMIVGFTFA, LFDPIVVAIMLIIGGLLIFYV, VGLKTALMIGLFQCLALIPGT, AEFSFFLGIPVIVGAALLDLL, VLGIGTVVSFIVALLCIRLLV, and IFAWLRIITGVLVLIAAWGFG.

Belongs to the UppP family.

It is found in the cell inner membrane. The enzyme catalyses di-trans,octa-cis-undecaprenyl diphosphate + H2O = di-trans,octa-cis-undecaprenyl phosphate + phosphate + H(+). Its function is as follows. Catalyzes the dephosphorylation of undecaprenyl diphosphate (UPP). Confers resistance to bacitracin. The sequence is that of Undecaprenyl-diphosphatase from Psychrobacter arcticus (strain DSM 17307 / VKM B-2377 / 273-4).